We begin with the raw amino-acid sequence, 32 residues long: Protamine-3A (32 aa).

The tract at residues 1 to 32 (PRRRRRSSSRPIRRRRRPRVSRRRRRGGRRRR) is disordered.

As to expression, testis.

The protein localises to the nucleus. It is found in the chromosome. Protamines substitute for histones in the chromatin of sperm during the haploid phase of spermatogenesis. They compact sperm DNA into a highly condensed, stable and inactive complex. This chain is Protamine-3A, found in Oncorhynchus mykiss (Rainbow trout).